The sequence spans 228 residues: Ribose-5-phosphate isomerase A (228 aa).

Substrate-binding positions include Thr29 to Thr32, Asp84 to Asp87, and Lys97 to Gly100. The Proton acceptor role is filled by Glu106. Lys124 contributes to the substrate binding site.

It belongs to the ribose 5-phosphate isomerase family. As to quaternary structure, homodimer.

It catalyses the reaction aldehydo-D-ribose 5-phosphate = D-ribulose 5-phosphate. It functions in the pathway carbohydrate degradation; pentose phosphate pathway; D-ribose 5-phosphate from D-ribulose 5-phosphate (non-oxidative stage): step 1/1. In terms of biological role, catalyzes the reversible conversion of ribose-5-phosphate to ribulose 5-phosphate. In Sphingopyxis alaskensis (strain DSM 13593 / LMG 18877 / RB2256) (Sphingomonas alaskensis), this protein is Ribose-5-phosphate isomerase A.